The primary structure comprises 968 residues: RNA polymerase-associated protein RapA (968 aa).

A Helicase ATP-binding domain is found at 163 to 332 (EVGQRFAPRV…FARLRLLDPD (170 aa)). 176-183 (DEVGLGKT) provides a ligand contact to ATP. Positions 278–281 (DEAH) match the DEAH box motif. The Helicase C-terminal domain occupies 491–678 (RVDWLIDFLK…GTKARYQELK (188 aa)).

The protein belongs to the SNF2/RAD54 helicase family. RapA subfamily. Interacts with the RNAP. Has a higher affinity for the core RNAP than for the holoenzyme. Its ATPase activity is stimulated by binding to RNAP.

In terms of biological role, transcription regulator that activates transcription by stimulating RNA polymerase (RNAP) recycling in case of stress conditions such as supercoiled DNA or high salt concentrations. Probably acts by releasing the RNAP, when it is trapped or immobilized on tightly supercoiled DNA. Does not activate transcription on linear DNA. Probably not involved in DNA repair. In Shewanella pealeana (strain ATCC 700345 / ANG-SQ1), this protein is RNA polymerase-associated protein RapA.